The primary structure comprises 279 residues: Urease accessory protein UreD (279 aa).

Belongs to the UreD family. As to quaternary structure, ureD, UreF and UreG form a complex that acts as a GTP-hydrolysis-dependent molecular chaperone, activating the urease apoprotein by helping to assemble the nickel containing metallocenter of UreC. The UreE protein probably delivers the nickel.

Its subcellular location is the cytoplasm. Functionally, required for maturation of urease via the functional incorporation of the urease nickel metallocenter. This chain is Urease accessory protein UreD, found in Nostoc sp. (strain PCC 7120 / SAG 25.82 / UTEX 2576).